Reading from the N-terminus, the 617-residue chain is Probable translation initiation factor IF-2 (617 aa).

The tr-type G domain maps to 14-231; that stretch reads LRQPIVVVLG…VLAGLTQTYL (218 aa). The interval 23 to 30 is G1; it reads GHVDHGKT. Residue 23 to 30 participates in GTP binding; the sequence is GHVDHGKT. A G2 region spans residues 48–52; sequence GITQH. Positions 87–90 are G3; it reads DTPG. Residues 87 to 91 and 141 to 144 each bind GTP; these read DTPGH and NKID. The G4 stretch occupies residues 141–144; sequence NKID. The interval 209–211 is G5; the sequence is SAR.

This sequence belongs to the TRAFAC class translation factor GTPase superfamily. Classic translation factor GTPase family. IF-2 subfamily.

Its function is as follows. Function in general translation initiation by promoting the binding of the formylmethionine-tRNA to ribosomes. Seems to function along with eIF-2. This chain is Probable translation initiation factor IF-2 (infB), found in Aeropyrum pernix (strain ATCC 700893 / DSM 11879 / JCM 9820 / NBRC 100138 / K1).